The following is a 542-amino-acid chain: Probable myosin-binding protein 6 (542 aa).

The N-terminal stretch at 1-21 (MYIQLLCFFLFLFLLLQATMS) is a signal peptide. Residues 39–59 (FLIYTVLEWSLIVFLFIDGVI) form a helical membrane-spanning segment. Residues 219–239 (SFLAPAPSPRVSHNKLSENES) are disordered. The region spanning 300 to 398 (SILNQLKKEV…ELEAEFEVYR (99 aa)) is the GTD-binding domain. The segment at 419-480 (GNASAYDDCQ…DEEKGSESKE (62 aa)) is disordered. Residues 437-456 (AVSSSNQQENGENIDQNGQS) are compositionally biased toward polar residues. The span at 471-480 (DEEKGSESKE) shows a compositional bias: basic and acidic residues.

It localises to the membrane. In terms of biological role, probable membrane-anchored myosin receptors. In Arabidopsis thaliana (Mouse-ear cress), this protein is Probable myosin-binding protein 6.